Here is a 477-residue protein sequence, read N- to C-terminus: Protein DETOXIFICATION 5 (477 aa).

12 helical membrane passes run 38–58 (AAPM…SVMV), 72–92 (LATA…VGAL), 113–133 (FSAI…WFYM), 146–166 (ISKV…AQAV), 187–207 (AITT…AFGL), 211–231 (GAAL…ALYV), 263–283 (AAMT…SGLL), 292–312 (VLSI…GIGA), 333–353 (AVFA…TLLF), 376–396 (LSSL…LDGV), 411–431 (VVAY…WGHM), and 436–456 (LWIG…IVTA).

Belongs to the multi antimicrobial extrusion (MATE) (TC 2.A.66.1) family.

Its subcellular location is the membrane. In Arabidopsis thaliana (Mouse-ear cress), this protein is Protein DETOXIFICATION 5.